A 496-amino-acid polypeptide reads, in one-letter code: MDPTPALAEIVASLARVRVLCVGDVMLDRFVRGDVERISPEAPIPIVRVRDERAMLGGAGNVVRNIVALGGRCAFMAVIGEDRAGAEIGGLLGDEHKVDSFIGIQPNRRTSVKTRFFAGSQQLLRADDETIAPLDPYDADRLLGDVRSQITTVGALVLSDYGKGVLDGPVAASLIAMGRTQNLPVIVDPKGRDFTRYRGATVLTPNRKELAEATGLPTGTDDEVVTACRQVIARCGVDTVLATRSQDGMTLVGADGSVLHLPAEAREVYDVSGAGDTVVATLAAALAGGAPLAVACRLANLAAGIVVGRVGTAAVPAADLMAAVHQEEVSARDSKIVGAEDAREVVDKWRRHGLRIGFTNGCFDLLHPGHVSLLRQARAACDRLVVGLNSDASVRRLKGDSRPVQDETARAIVLASLADVDLVAVFGEDTPLGLITTLLPDVLVKGADYTVDTVVGSDVVLTNGGRVLLADLKAGFSTTSTIARLHGGSRRSGDTL.

Residues 1–331 are ribokinase; sequence MDPTPALAEI…AAVHQEEVSA (331 aa). An ATP-binding site is contributed by 206-209; it reads NRKE. Asp276 is a catalytic residue. A cytidylyltransferase region spans residues 358-496; that stretch reads FTNGCFDLLH…GGSRRSGDTL (139 aa).

This sequence in the N-terminal section; belongs to the carbohydrate kinase PfkB family. It in the C-terminal section; belongs to the cytidylyltransferase family. As to quaternary structure, homodimer.

It catalyses the reaction D-glycero-beta-D-manno-heptose 7-phosphate + ATP = D-glycero-beta-D-manno-heptose 1,7-bisphosphate + ADP + H(+). The enzyme catalyses D-glycero-beta-D-manno-heptose 1-phosphate + ATP + H(+) = ADP-D-glycero-beta-D-manno-heptose + diphosphate. Its pathway is nucleotide-sugar biosynthesis; ADP-L-glycero-beta-D-manno-heptose biosynthesis; ADP-L-glycero-beta-D-manno-heptose from D-glycero-beta-D-manno-heptose 7-phosphate: step 1/4. The protein operates within nucleotide-sugar biosynthesis; ADP-L-glycero-beta-D-manno-heptose biosynthesis; ADP-L-glycero-beta-D-manno-heptose from D-glycero-beta-D-manno-heptose 7-phosphate: step 3/4. Catalyzes the phosphorylation of D-glycero-D-manno-heptose 7-phosphate at the C-1 position to selectively form D-glycero-beta-D-manno-heptose-1,7-bisphosphate. Functionally, catalyzes the ADP transfer from ATP to D-glycero-beta-D-manno-heptose 1-phosphate, yielding ADP-D-glycero-beta-D-manno-heptose. This Rhodospirillum rubrum (strain ATCC 11170 / ATH 1.1.1 / DSM 467 / LMG 4362 / NCIMB 8255 / S1) protein is Bifunctional protein HldE.